Here is a 177-residue protein sequence, read N- to C-terminus: MTIHIFLCFLLILKIVNALKSNRFSSYIYTPKTFLYNNKSIPNKKLVRKFVNRIKLVDDTIKSNEHIIKITDNATNKIKELQKECNDDYLILKLYVENGGCKGLKYKLNPIKKNEIEEDDYIQQFDELKFILSIDSTSVIYIYNNTLDYSNDLISGGFKFINPNATKKCGCGKSFNV.

A signal peptide spans 1-18 (MTIHIFLCFLLILKIVNA). [4Fe-4S] cluster contacts are provided by Cys-101, Cys-169, and Cys-171.

It belongs to the HesB/IscA family. In terms of assembly, homodimer. Homotetramer formation is observed in vitro.

Its subcellular location is the plastid. The protein localises to the apicoplast. The protein operates within cofactor biosynthesis; iron-sulfur cluster biosynthesis. Its function is as follows. Participates in the sulfur mobilization (SUF) pathway for iron-sulfur (Fe-S) cluster biogenesis. Involved in the pre-assembly of [4Fe-4S] clusters and their transfer to target proteins. The chain is Iron-sulfur cluster assembly protein SufA from Plasmodium falciparum (isolate 3D7).